Here is a 270-residue protein sequence, read N- to C-terminus: Undecaprenyl-diphosphatase 1 (270 aa).

The next 7 membrane-spanning stretches (helical) occupy residues 5-25, 42-62, 89-109, 117-137, 192-212, 220-240, and 250-270; these read YYIL…PIPI, IEGF…VLLI, FFFI…GVLF, LKGV…LWII, FSFL…ITDI, TLFV…YISL, and GNLK…LIFL.

It belongs to the UppP family.

It is found in the cell membrane. The catalysed reaction is di-trans,octa-cis-undecaprenyl diphosphate + H2O = di-trans,octa-cis-undecaprenyl phosphate + phosphate + H(+). Functionally, catalyzes the dephosphorylation of undecaprenyl diphosphate (UPP). Confers resistance to bacitracin. This is Undecaprenyl-diphosphatase 1 from Bacillus cereus (strain ATCC 10987 / NRS 248).